The chain runs to 633 residues: MHGLLLAGLLALPMNVLAHPAEQHASNVLSRRGVDIESFRLPLKAKYMDSDAAAQKIQAMSFSKDDDYVSTATKLVKSTFPKSTFRVVDDHYIGTNGIGHVHFKQTAHGLDIDNSDFNVNIDRDGKVFSFGNSFFTGEIPKENPMVKRAFSDPVKALKGAVKALNLPVKSDNAKAKTTAGKESFEFMGTTGALSAPKANLVYLQKEDGTLALTWRVETDVGDNWLLTYVDAHNSETVHNVVDYVASAEFKVFAWGLNDPTEGNPTSIRDPWTDSSPYTWHSDGMTKYPTTRGNNAIAQDNPTGGSTYINNYRPQSPNLIFNYPWSPTATPPSSYKDFSITQLFYTTNRFHDLLYSFGFNEAAGNFQVNNGNKGGRGNDFAIVNAQDGSGTNNANFATPPDGSPGRMRMYNWTTARPNRDGCLEAGIVIHEYAHGLSNRLCGGPANSGCLNALESGGMGEGWGDFYATAIRLKPRDTKDTNYSMGAWAANNPKGIRAYLYSTNLQTNPYMYTSVNSLREVHQIGTVWATMLYDLMWALIEAHGGTYSANPVFRNGVPQDGRHLAMKLVMDGMALQPCNPNFVQARDAILDADRALTNSANKCTIWKAFAKRGLGYGAKYDARNRTGSNRLPPGC.

Residues 1-18 (MHGLLLAGLLALPMNVLA) form the signal peptide. Positions 19–246 (HPAEQHASNV…VHNVVDYVAS (228 aa)) are excised as a propeptide. Asn410 is a glycosylation site (N-linked (GlcNAc...) asparagine). Zn(2+) is bound at residue His429. Glu430 is an active-site residue. His433 is a binding site for Zn(2+). 2 N-linked (GlcNAc...) asparagine glycosylation sites follow: Asn480 and Asn622.

This sequence belongs to the peptidase M36 family. Requires Zn(2+) as cofactor.

The protein localises to the secreted. Its function is as follows. Secreted metalloproteinase probably acting as a virulence factor. The polypeptide is Extracellular metalloproteinase 3 (MEP3) (Trichophyton tonsurans (Scalp ringworm fungus)).